Here is a 354-residue protein sequence, read N- to C-terminus: Type II secretion system protein K (354 aa).

A propeptide spans 1 to 7 (leader sequence); sequence MSRRQRG. Residues 8–28 form a helical membrane-spanning segment; sequence VALLIVMLMLSLMVTIAASIT. Residues 29-354 are Periplasmic-facing; that stretch reads ERSGKAWQRT…QYGGYRTVNP (326 aa). A disordered region spans residues 114–151; sequence NVTPNNASGNNTSGNNNAANGSSGNGNSPQPPKVGTSE. Positions 118–141 are enriched in low complexity; the sequence is NNASGNNTSGNNNAANGSSGNGNS.

It belongs to the GSP K family. Type II secretion is composed of four main components: the outer membrane complex, the inner membrane complex, the cytoplasmic secretion ATPase and the periplasm-spanning pseudopilus. Interacts with core component OutG. In terms of processing, cleaved by prepilin peptidase.

Its subcellular location is the cell inner membrane. Its function is as follows. Component of the type II secretion system required for the energy-dependent secretion of extracellular factors such as proteases and toxins from the periplasm. Plays a role in pseudopilus assembly and seems to control its length. Interacts with the pseudopilus tip complex that is critical for the recognition and binding of secretion substrates. The chain is Type II secretion system protein K (outK) from Dickeya chrysanthemi (Pectobacterium chrysanthemi).